The chain runs to 154 residues: Ribosome maturation factor RimP (154 aa).

This sequence belongs to the RimP family.

It localises to the cytoplasm. Required for maturation of 30S ribosomal subunits. This chain is Ribosome maturation factor RimP, found in Natranaerobius thermophilus (strain ATCC BAA-1301 / DSM 18059 / JW/NM-WN-LF).